Reading from the N-terminus, the 231-residue chain is NADH-ubiquinone oxidoreductase chain 4 (231 aa).

6 helical membrane-spanning segments follow: residues 1–21 (PIAG…YGII), 34–54 (MFLP…LTCL), 63–85 (IAYS…TPWG), 89–111 (AMAL…NTTY), 128–148 (ILPM…AIPP), and 169–189 (TIIM…HMFL).

This sequence belongs to the complex I subunit 4 family.

It is found in the mitochondrion membrane. It catalyses the reaction a ubiquinone + NADH + 5 H(+)(in) = a ubiquinol + NAD(+) + 4 H(+)(out). Functionally, core subunit of the mitochondrial membrane respiratory chain NADH dehydrogenase (Complex I) that is believed to belong to the minimal assembly required for catalysis. Complex I functions in the transfer of electrons from NADH to the respiratory chain. The immediate electron acceptor for the enzyme is believed to be ubiquinone. In Deinagkistrodon acutus (Hundred-pace snake), this protein is NADH-ubiquinone oxidoreductase chain 4 (MT-ND4).